The primary structure comprises 620 residues: Chaperone protein HscA homolog (620 aa).

This sequence belongs to the heat shock protein 70 family.

Functionally, chaperone involved in the maturation of iron-sulfur cluster-containing proteins. Has a low intrinsic ATPase activity which is markedly stimulated by HscB. The protein is Chaperone protein HscA homolog of Shewanella sp. (strain ANA-3).